A 230-amino-acid chain; its full sequence is Lipoprotein-releasing system ATP-binding protein LolD (230 aa).

In terms of domain architecture, ABC transporter spans 6–230 (LQVQAVSKSY…GYLQVPESAQ (225 aa)). 42-49 (GTSGSGKS) lines the ATP pocket.

It belongs to the ABC transporter superfamily. Lipoprotein translocase (TC 3.A.1.125) family. As to quaternary structure, the complex is composed of two ATP-binding proteins (LolD) and two transmembrane proteins (LolC and LolE).

Its subcellular location is the cell inner membrane. Part of the ABC transporter complex LolCDE involved in the translocation of mature outer membrane-directed lipoproteins, from the inner membrane to the periplasmic chaperone, LolA. Responsible for the formation of the LolA-lipoprotein complex in an ATP-dependent manner. The sequence is that of Lipoprotein-releasing system ATP-binding protein LolD from Shewanella oneidensis (strain ATCC 700550 / JCM 31522 / CIP 106686 / LMG 19005 / NCIMB 14063 / MR-1).